The sequence spans 111 residues: Cytochrome c6 (111 aa).

A signal peptide spans Met-1 to Ala-25. Heme c contacts are provided by Cys-39, Cys-42, His-43, and Met-83.

This sequence belongs to the cytochrome c family. PetJ subfamily. As to quaternary structure, monomer. Binds 1 heme c group covalently per subunit.

Its subcellular location is the cellular thylakoid lumen. In terms of biological role, functions as an electron carrier between membrane-bound cytochrome b6-f and photosystem I in oxygenic photosynthesis. The sequence is that of Cytochrome c6 (petJ) from Nostoc sp. (strain PCC 7120 / SAG 25.82 / UTEX 2576).